The following is a 98-amino-acid chain: UPF0235 protein Asuc_1977 (98 aa).

The protein belongs to the UPF0235 family.

The protein is UPF0235 protein Asuc_1977 of Actinobacillus succinogenes (strain ATCC 55618 / DSM 22257 / CCUG 43843 / 130Z).